We begin with the raw amino-acid sequence, 307 residues long: Ribosomal protein L11 methyltransferase (307 aa).

Residues T162, G183, D205, and N244 each coordinate S-adenosyl-L-methionine.

This sequence belongs to the methyltransferase superfamily. PrmA family.

Its subcellular location is the cytoplasm. The enzyme catalyses L-lysyl-[protein] + 3 S-adenosyl-L-methionine = N(6),N(6),N(6)-trimethyl-L-lysyl-[protein] + 3 S-adenosyl-L-homocysteine + 3 H(+). Functionally, methylates ribosomal protein L11. The protein is Ribosomal protein L11 methyltransferase of Bordetella parapertussis (strain 12822 / ATCC BAA-587 / NCTC 13253).